Reading from the N-terminus, the 485-residue chain is Glutamyl-tRNA(Gln) amidotransferase subunit A (485 aa).

Catalysis depends on charge relay system residues K79 and S154. The Acyl-ester intermediate role is filled by S178.

This sequence belongs to the amidase family. GatA subfamily. In terms of assembly, heterotrimer of A, B and C subunits.

The catalysed reaction is L-glutamyl-tRNA(Gln) + L-glutamine + ATP + H2O = L-glutaminyl-tRNA(Gln) + L-glutamate + ADP + phosphate + H(+). Its function is as follows. Allows the formation of correctly charged Gln-tRNA(Gln) through the transamidation of misacylated Glu-tRNA(Gln) in organisms which lack glutaminyl-tRNA synthetase. The reaction takes place in the presence of glutamine and ATP through an activated gamma-phospho-Glu-tRNA(Gln). This Clostridium novyi (strain NT) protein is Glutamyl-tRNA(Gln) amidotransferase subunit A.